The sequence spans 340 residues: Pilin (340 aa).

The first 23 residues, Met1–Gly23, serve as a signal peptide directing secretion. 2 consecutive cross-links (isoaspartyl lysine isopeptide (Lys-Asn)) follow at residues Lys36–Asn168 and Lys179–Asn303. Residue Lys161 forms a Threonyl lysine isopeptide (Lys-Thr) (interchain with T-311) linkage. The short motif at Glu308–Gly312 is the EVPTG sorting signal element. Residue Thr311 is modified to Pentaglycyl murein peptidoglycan amidated threonine; alternate. Residue Thr311 forms a Threonyl lysine isopeptide (Thr-Lys) (interchain with K-161); alternate linkage. A propeptide spans Gly312–Ala340 (removed by sortase C1).

This sequence belongs to the Streptococcus pilin family. Forms columns of about 3-nanometers in diameter of head-to-tail-assembled molecules. In terms of processing, proteolytically processed and assembled in pili through a transpeptidation reaction catalyzed by the sortase C1. The last pilin subunit is cross-linked to the peptidoglycan.

It localises to the secreted. The protein localises to the cell wall. It is found in the fimbrium. In terms of biological role, major component of the pilus. A stack of the pilin subunits, joined by intermolecular isopeptide bonds, forms the pilus. The pilus is required for bacterial adhesion to host cells, for bacterial aggregation, and for biofilm formation. The protein is Pilin of Streptococcus pyogenes serotype M1.